Here is a 159-residue protein sequence, read N- to C-terminus: Transcriptional repressor NrdR (159 aa).

Residues 3–34 fold into a zinc finger; that stretch reads CPTCQNTDSRVLESRSADTGKSVRRRRECLNC. An ATP-cone domain is found at 49-139; it reads ISVLKKDGSR…VYRKFNGVKD (91 aa).

It belongs to the NrdR family. It depends on Zn(2+) as a cofactor.

Its function is as follows. Negatively regulates transcription of bacterial ribonucleotide reductase nrd genes and operons by binding to NrdR-boxes. The sequence is that of Transcriptional repressor NrdR from Prochlorococcus marinus (strain MIT 9515).